A 236-amino-acid polypeptide reads, in one-letter code: Transcriptional regulatory protein RprY (236 aa).

In terms of domain architecture, Response regulatory spans 9-123 (RILLCEDDEN…ELTFRIEAIL (115 aa)). Residue aspartate 58 is modified to 4-aspartylphosphate. The ompR/PhoB-type DNA-binding region spans 134–231 (SNVYKIGKFT…IHGKGYKLIT (98 aa)).

In terms of processing, phosphorylated by RprX.

It is found in the cytoplasm. Member of the two-component regulatory system RprX/RprY. The polypeptide is Transcriptional regulatory protein RprY (rprY) (Bacteroides fragilis (strain YCH46)).